We begin with the raw amino-acid sequence, 153 residues long: 17.6 kDa class I heat shock protein (153 aa).

The sHSP domain maps to 38 to 153 (ETAAIVNARI…PMVKAIDISG (116 aa)).

The protein belongs to the small heat shock protein (HSP20) family. In terms of assembly, forms oligomeric structures.

The protein localises to the cytoplasm. The polypeptide is 17.6 kDa class I heat shock protein (HSP17.6) (Helianthus annuus (Common sunflower)).